We begin with the raw amino-acid sequence, 624 residues long: Actin-related protein 8 (624 aa).

M1 is modified (N-acetylmethionine). The span at 1–25 shows a compositional bias: basic and acidic residues; sequence MTQAEKGDTENGKEKGGEKEKEQRG. The disordered stretch occupies residues 1 to 29; it reads MTQAEKGDTENGKEKGGEKEKEQRGVKRP. 2 residues coordinate ATP: S55 and T56. The residue at position 132 (S132) is a Phosphoserine. 283–286 is an ATP binding site; the sequence is DVGD. S412 carries the post-translational modification Phosphoserine. The disordered stretch occupies residues 430-462; sequence SKQEQSAKATADRKSASKPIGFEGDLRGQSSDL.

This sequence belongs to the actin family. ARP8 subfamily. Component of the chromatin remodeling INO80 complex; specifically part of a complex module associated with the DBINO domain of INO80. Exists as monomers and dimers, but the dimer is most probably the biologically relevant form required for stable interactions with histones that exploits the twofold symmetry of the nucleosome core.

It localises to the nucleus. Its subcellular location is the chromosome. Plays an important role in the functional organization of mitotic chromosomes. Exhibits low basal ATPase activity, and unable to polymerize. Its function is as follows. Proposed core component of the chromatin remodeling INO80 complex which is involved in transcriptional regulation, DNA replication and probably DNA repair. Required for the recruitment of INO80 (and probably the INO80 complex) to sites of DNA damage Strongly prefer nucleosomes and H3-H4 tetramers over H2A-H2B dimers, suggesting it may act as a nucleosome recognition module within the complex. The sequence is that of Actin-related protein 8 (ACTR8) from Pongo abelii (Sumatran orangutan).